Here is a 455-residue protein sequence, read N- to C-terminus: MERIERDTLGEISVDATKYWGAQTERSKRNFAIGDNPMPIEIIYAFAQLKKATAKVNAAEGKLSEEKAIAIGQVCDQIIQGELDEHFPLVVWQTGSGTQSNMNVNEVIAHVANLTLGEGQIHPNDDVNMSQSSNDTFPTAMHIAAYGALVTKLLPEITKMEAVLAEKKSKYMHLVKIGRTHLQDATPLTLGQEISGWEACLTNNKNYLETSMKAILPLAIGGTAVGTGLNASRDFGDKVAEELMKQTGYPFTSDSNKYFALTSHSPINFVHGSIRSLASDLMKIANDIRLLASGPRSGIGELTIPVNEPGSSIMPGKVNPTQCEAMTMVAAQVMGNDVTINVAASQGNFELNVYKPVIIFNFLESVKLLSDSMRSFRLHCLEGLTANEKVIETKVNDSLMLVTALNPHIGYEKAAKIAKLAFDENTTLKEAAIKTGFVTEKQFDLWIDPLKMTNL.

Substrate contacts are provided by residues 96-98 (SGT), 122-125 (HPND), 132-134 (SSN), and Thr180. His181 functions as the Proton donor/acceptor in the catalytic mechanism. Ser311 is an active-site residue. Residues Ser312 and 317–319 (KVN) each bind substrate.

The protein belongs to the class-II fumarase/aspartase family. Fumarase subfamily. As to quaternary structure, homotetramer.

The protein resides in the cytoplasm. The catalysed reaction is (S)-malate = fumarate + H2O. Its pathway is carbohydrate metabolism; tricarboxylic acid cycle; (S)-malate from fumarate: step 1/1. In terms of biological role, involved in the TCA cycle. Catalyzes the stereospecific interconversion of fumarate to L-malate. The sequence is that of Fumarate hydratase class II from Listeria monocytogenes serotype 4b (strain F2365).